A 412-amino-acid polypeptide reads, in one-letter code: NADH-ubiquinone oxidoreductase 49 kDa subunit (412 aa).

Belongs to the complex I 49 kDa subunit family.

The protein localises to the hydrogenosome. It carries out the reaction a ubiquinone + NADH + 5 H(+)(in) = a ubiquinol + NAD(+) + 4 H(+)(out). Its function is as follows. Transfer of electrons from NADH to the respiratory chain. The immediate electron acceptor for the enzyme is believed to be ubiquinone. Component of the iron-sulfur (IP) fragment of the enzyme. This Nyctotherus ovalis protein is NADH-ubiquinone oxidoreductase 49 kDa subunit (nad7).